A 251-amino-acid chain; its full sequence is SNAP25 homologous protein SNAP29 (251 aa).

Positions 1-52 (MAPKNSSWNPFDDEKEAAKSFSLNPFDDDDDDKEVEKRFTSSLKPSGGKENQ) are disordered. A compositionally biased stretch (polar residues) spans 40–52 (TSSLKPSGGKENQ). Positions 186–248 (KTQIAKQDEA…KQSNQRARYL (63 aa)) constitute a t-SNARE coiled-coil homology domain.

It belongs to the SNAP-25 family.

It localises to the membrane. The protein localises to the cytoplasm. Its function is as follows. SNAREs, soluble N-ethylmaleimide-sensitive factor-attachment protein receptors, are essential proteins for fusion of cellular membranes. SNAREs localized on opposing membranes assemble to form a trans-SNARE complex, an extended, parallel four alpha-helical bundle that drives membrane fusion. This chain is SNAP25 homologous protein SNAP29 (SNAP29), found in Arabidopsis thaliana (Mouse-ear cress).